We begin with the raw amino-acid sequence, 216 residues long: Thymidylate kinase (216 aa).

ATP is bound at residue 10-17; that stretch reads GVDGSGKT.

Belongs to the thymidylate kinase family.

The catalysed reaction is dTMP + ATP = dTDP + ADP. Its function is as follows. Phosphorylation of dTMP to form dTDP in both de novo and salvage pathways of dTTP synthesis. This Pelotomaculum thermopropionicum (strain DSM 13744 / JCM 10971 / SI) protein is Thymidylate kinase.